The following is a 662-amino-acid chain: uncharacterized protein (662 aa).

16 helical membrane passes run 10–30 (SSIV…GWPV), 46–66 (PVIG…FLPI), 68–88 (AINL…LSKG), 101–121 (GFCW…EIIP), 167–187 (LIYY…TGAT), 193–213 (IALT…LAVA), 217–237 (SAYA…KPAV), 263–283 (PWVP…MAYL), 285–305 (ILYS…AILA), 312–332 (MWAG…LSVS), 342–362 (EVLI…AVLI), 373–393 (KVVE…LDIP), 394–414 (GFWL…FLIW), 432–452 (ALTV…SVIM), 460–480 (VLIP…STTI), and 485–505 (LVGR…ILVG).

It localises to the cell membrane. This is an uncharacterized protein from Sinorhizobium fredii (strain NBRC 101917 / NGR234).